Reading from the N-terminus, the 694-residue chain is Elongation factor G (694 aa).

In terms of domain architecture, tr-type G spans 8–285 (EKVRNIGIAA…AVVELLPSPQ (278 aa)). GTP is bound by residues 17–24 (AHIDAGKT), 81–85 (DTPGH), and 135–138 (NKMD).

This sequence belongs to the TRAFAC class translation factor GTPase superfamily. Classic translation factor GTPase family. EF-G/EF-2 subfamily.

Its subcellular location is the cytoplasm. Its function is as follows. Catalyzes the GTP-dependent ribosomal translocation step during translation elongation. During this step, the ribosome changes from the pre-translocational (PRE) to the post-translocational (POST) state as the newly formed A-site-bound peptidyl-tRNA and P-site-bound deacylated tRNA move to the P and E sites, respectively. Catalyzes the coordinated movement of the two tRNA molecules, the mRNA and conformational changes in the ribosome. The sequence is that of Elongation factor G (fusA) from Synechococcus sp. (strain ATCC 27144 / PCC 6301 / SAUG 1402/1) (Anacystis nidulans).